Here is a 72-residue protein sequence, read N- to C-terminus: UPF0270 protein YheU (72 aa).

It belongs to the UPF0270 family.

This is UPF0270 protein YheU from Salmonella choleraesuis (strain SC-B67).